A 404-amino-acid chain; its full sequence is MEQNNSLFSRIINANLVLQIIFGIAAGIILATVSHDLAKSAATLGGLFVGALKAVAPILVFVLVASSIANQKKGSNTNMRPIISLYLIGTLLAALTAVTMSFAFPTTLVLVTGAEGAAPPQGIIEVLRTLVFKIVDNPINALRTANYIGILAWAIGLGIALHHASQNTKDVLSDMSHGVSFIVRFIIRLAPIGIFGLVANTIAETGFSALGGYASLLGVLLGSMAIVALVINPLMVFIKIRKNPYPLVFTCLRESGVTAFFTRSSAANIPVNMTLCEKLNIHEDSYSVSIPLGATINMAGAAITITVLTLAAVNTMGIQVDMFTALLLSVVAAISACGASGVAGGSLLLIPLACGLFGISNDVAMQVVGVGFIIGVIQDSAETGLNSSTDVLFTAACHRARERS.

9 helical membrane passes run 11–31, 44–64, 82–102, 144–164, 179–199, 218–238, 290–310, 316–336, and 363–383; these read IINANLVLQIIFGIAAGIILA, LGGLFVGALKAVAPILVFVLV, IISLYLIGTLLAALTAVTMSF, TANYIGILAWAIGLGIALHHA, VSFIVRFIIRLAPIGIFGLVA, GVLLGSMAIVALVINPLMVFI, IPLGATINMAGAAITITVLTL, MGIQVDMFTALLLSVVAAISA, and VAMQVVGVGFIIGVIQDSAET.

This sequence belongs to the dicarboxylate/amino acid:cation symporter (DAACS) (TC 2.A.23) family.

Its subcellular location is the cell inner membrane. It catalyses the reaction L-serine(in) + Na(+)(in) = L-serine(out) + Na(+)(out). The enzyme catalyses L-threonine(in) + Na(+)(in) = L-threonine(out) + Na(+)(out). Its function is as follows. Involved in the import of serine and threonine into the cell, with the concomitant import of sodium (symport system). This chain is Serine/threonine transporter SstT, found in Desulfotalea psychrophila (strain LSv54 / DSM 12343).